The following is an 83-amino-acid chain: MSSGGLLLLLGLLTLWAELTPVSSKDRPKFCELPADSGPCRGILRAFYYHPVHRTCQMFIYGGCYGNANNFKTIDECKRTCAA.

A signal peptide spans 1 to 24 (MSSGGLLLLLGLLTLWAELTPVSS). In terms of domain architecture, BPTI/Kunitz inhibitor spans 31 to 81 (CELPADSGPCRGILRAFYYHPVHRTCQMFIYGGCYGNANNFKTIDECKRTC). 3 disulfide bridges follow: Cys31-Cys81, Cys40-Cys64, and Cys56-Cys77.

Its subcellular location is the secreted. Functionally, serine protease inhibitor. This is Tigerin-4 from Notechis scutatus scutatus (Mainland tiger snake).